A 930-amino-acid polypeptide reads, in one-letter code: Translation initiation factor IF-2 (930 aa).

Over residues 50 to 67 (FKPAAAPKVEAKPAAPKV) the composition is skewed to low complexity. Disordered regions lie at residues 50 to 217 (FKPA…SSEE) and 260 to 346 (EVVP…HELP). 2 stretches are compositionally biased toward basic and acidic residues: residues 68–90 (SAEK…EAKP) and 110–125 (FKAE…AERR). Low complexity predominate over residues 129–141 (KGNNRDQQQNGNR). Composition is skewed to basic and acidic residues over residues 157–167 (RDNRRFNDQAK) and 262–295 (VPEK…DGPR). Over residues 309-318 (NQKNSNWNNN) the composition is skewed to low complexity. Residues 337 to 346 (VTERKFHELP) are compositionally biased toward basic and acidic residues. Positions 432–599 (ERPPVVTIMG…TVLLVAEIQE (168 aa)) constitute a tr-type G domain. The segment at 441 to 448 (GHVDHGKT) is G1. Position 441–448 (441–448 (GHVDHGKT)) interacts with GTP. Residues 466–470 (GITQH) form a G2 region. Positions 487–490 (DTPG) are G3. GTP contacts are provided by residues 487-491 (DTPGH) and 541-544 (NKID). Residues 541 to 544 (NKID) are G4. Residues 577–579 (SAK) form a G5 region.

The protein belongs to the TRAFAC class translation factor GTPase superfamily. Classic translation factor GTPase family. IF-2 subfamily.

It is found in the cytoplasm. Its function is as follows. One of the essential components for the initiation of protein synthesis. Protects formylmethionyl-tRNA from spontaneous hydrolysis and promotes its binding to the 30S ribosomal subunits. Also involved in the hydrolysis of GTP during the formation of the 70S ribosomal complex. This Streptococcus pneumoniae (strain Taiwan19F-14) protein is Translation initiation factor IF-2.